The following is a 415-amino-acid chain: L-cysteine:1D-myo-inositol 2-amino-2-deoxy-alpha-D-glucopyranoside ligase (415 aa).

A Zn(2+)-binding site is contributed by Cys47. Residues 47-50 (CGIT), Thr62, and 85-87 (NVT) contribute to the L-cysteinyl-5'-AMP site. The 'HIGH' region motif lies at 49-59 (ITPYDATHLGH). The 'ERGGDP' region signature appears at 190–195 (ERGGDP). Trp230 provides a ligand contact to L-cysteinyl-5'-AMP. Zn(2+) is bound at residue Cys234. 252–254 (GSD) is an L-cysteinyl-5'-AMP binding site. Position 259 (His259) interacts with Zn(2+). L-cysteinyl-5'-AMP is bound at residue Ile286. A 'KMSKS' region motif is present at residues 292-296 (KMSKS).

It belongs to the class-I aminoacyl-tRNA synthetase family. MshC subfamily. In terms of assembly, monomer. Zn(2+) is required as a cofactor.

It catalyses the reaction 1D-myo-inositol 2-amino-2-deoxy-alpha-D-glucopyranoside + L-cysteine + ATP = 1D-myo-inositol 2-(L-cysteinylamino)-2-deoxy-alpha-D-glucopyranoside + AMP + diphosphate + H(+). Functionally, catalyzes the ATP-dependent condensation of GlcN-Ins and L-cysteine to form L-Cys-GlcN-Ins. The chain is L-cysteine:1D-myo-inositol 2-amino-2-deoxy-alpha-D-glucopyranoside ligase (mshC) from Mycolicibacterium paratuberculosis (strain ATCC BAA-968 / K-10) (Mycobacterium paratuberculosis).